The following is a 49-amino-acid chain: Large ribosomal subunit protein bL32 (49 aa).

Belongs to the bacterial ribosomal protein bL32 family.

This chain is Large ribosomal subunit protein bL32, found in Helicobacter hepaticus (strain ATCC 51449 / 3B1).